The chain runs to 169 residues: Positive control factor (169 aa).

The H-T-H motif DNA-binding region spans 132 to 157 (YERIADLLGVKKSTVQTTIKRASLKM).

Functionally, positive regulatory protein that acts at the late promoter PL. The sequence is that of Positive control factor (xpf) from Bacillus subtilis (strain 168).